The following is a 184-amino-acid chain: Probable N-acetyltransferase san (184 aa).

In terms of domain architecture, N-acetyltransferase spans 6-155 (IELGDVTPHN…DAHVLQKTLR (150 aa)). Substrate is bound at residue Y31. N6-acetyllysine; by autocatalysis is present on K47. Y73 is a catalytic residue. Residue M75 coordinates substrate. Acetyl-CoA is bound at residue 77–90 (LGCLSPYRRLGIGT). Residue H112 is part of the active site. 117–126 (NNGAIEFYKK) is a CoA binding site. The substrate stretch occupies residues 138-141 (YYKR). Residues 157-174 (TAPNSNSTATSTTANSNS) are compositionally biased toward low complexity. The interval 157-176 (TAPNSNSTATSTTANSNSRS) is disordered.

The protein belongs to the acetyltransferase family. Component of an acetyltransferase complex, at least composed of san, Ard1 and Nat1. In terms of processing, autoacetylated.

It is found in the cytoplasm. It carries out the reaction N-terminal L-methionyl-L-alanyl-[protein] + acetyl-CoA = N-terminal N(alpha)-acetyl-L-methionyl-L-alanyl-[protein] + CoA + H(+). The enzyme catalyses N-terminal L-methionyl-L-seryl-[protein] + acetyl-CoA = N-terminal N(alpha)-acetyl-L-methionyl-L-seryl-[protein] + CoA + H(+). It catalyses the reaction N-terminal L-methionyl-L-valyl-[protein] + acetyl-CoA = N-terminal N(alpha)-acetyl-L-methionyl-L-valyl-[protein] + CoA + H(+). The catalysed reaction is N-terminal L-methionyl-L-threonyl-[protein] + acetyl-CoA = N-terminal N(alpha)-acetyl-L-methionyl-L-threonyl-[protein] + CoA + H(+). It carries out the reaction N-terminal L-methionyl-L-lysyl-[protein] + acetyl-CoA = N-terminal N(alpha)-acetyl-L-methionyl-L-lysyl-[protein] + CoA + H(+). The enzyme catalyses N-terminal L-methionyl-L-leucyl-[protein] + acetyl-CoA = N-terminal N(alpha)-acetyl-L-methionyl-L-leucyl-[protein] + CoA + H(+). It catalyses the reaction N-terminal L-methionyl-L-phenylalanyl-[protein] + acetyl-CoA = N-terminal N(alpha)-acetyl-L-methionyl-L-phenylalanyl-[protein] + CoA + H(+). The catalysed reaction is N-terminal L-methionyl-L-tyrosyl-[protein] + acetyl-CoA = N-terminal N(alpha)-acetyl-L-methionyl-L-tyrosyl-[protein] + CoA + H(+). N-alpha-acetyltransferase that acetylates the N-terminus of proteins that retain their initiating methionine. Has a broad substrate specificity: able to acetylate the initiator methionine of most peptides. Also displays N-epsilon-acetyltransferase activity by mediating acetylation of the side chain of specific lysines on proteins. Autoacetylates. Required for the establishment of sister chromatid cohesion and couple the processes of cohesion and DNA replication to ensure that only sister chromatids become paired together. Required for the interaction between Scc1/vtd and SMC3, possibly by mediating N-terminal acetylation of Scc1/vtd. In terms of biological role, (Microbial infection) Required for optimal replication of E.chaffeensis in the immune tissues, hemocytes, and fat body. This Drosophila melanogaster (Fruit fly) protein is Probable N-acetyltransferase san (san).